We begin with the raw amino-acid sequence, 67 residues long: MPQLDTSTWFITIVSMLLSLFILMQLKFIKFSSFSTPCPTTMEKTKHLTPWEMKWTKTYLPHSLPLP.

Residues 8–24 traverse the membrane as a helical segment; that stretch reads TWFITIVSMLLSLFILM. Lys-54 bears the N6-acetyllysine; alternate mark. Lys-54 carries the N6-succinyllysine; alternate modification. Residue Lys-57 is modified to N6-acetyllysine.

It belongs to the ATPase protein 8 family. As to quaternary structure, component of the ATP synthase complex composed at least of ATP5F1A/subunit alpha, ATP5F1B/subunit beta, ATP5MC1/subunit c (homooctomer), MT-ATP6/subunit a, MT-ATP8/subunit 8, ATP5ME/subunit e, ATP5MF/subunit f, ATP5MG/subunit g, ATP5MK/subunit k, ATP5MJ/subunit j, ATP5F1C/subunit gamma, ATP5F1D/subunit delta, ATP5F1E/subunit epsilon, ATP5PF/subunit F6, ATP5PB/subunit b, ATP5PD/subunit d, ATP5PO/subunit OSCP. ATP synthase complex consists of a soluble F(1) head domain (subunits alpha(3) and beta(3)) - the catalytic core - and a membrane F(0) domain - the membrane proton channel (subunits c, a, 8, e, f, g, k and j). These two domains are linked by a central stalk (subunits gamma, delta, and epsilon) rotating inside the F1 region and a stationary peripheral stalk (subunits F6, b, d, and OSCP). Interacts with PRICKLE3.

It is found in the mitochondrion membrane. In terms of biological role, subunit 8, of the mitochondrial membrane ATP synthase complex (F(1)F(0) ATP synthase or Complex V) that produces ATP from ADP in the presence of a proton gradient across the membrane which is generated by electron transport complexes of the respiratory chain. ATP synthase complex consist of a soluble F(1) head domain - the catalytic core - and a membrane F(1) domain - the membrane proton channel. These two domains are linked by a central stalk rotating inside the F(1) region and a stationary peripheral stalk. During catalysis, ATP synthesis in the catalytic domain of F(1) is coupled via a rotary mechanism of the central stalk subunits to proton translocation. In vivo, can only synthesize ATP although its ATP hydrolase activity can be activated artificially in vitro. Part of the complex F(0) domain. This chain is ATP synthase F(0) complex subunit 8, found in Dasypus novemcinctus (Nine-banded armadillo).